The sequence spans 1077 residues: Deoxyribonuclease CdiA (1077 aa).

The FHA-2 stretch occupies residues 67 to 384; the sequence is IGTSRQKTTD…DRDNYDAKQS (318 aa). The span at 531-546 shows a compositional bias: polar residues; the sequence is QQNVDDLSRDTGNANG. The interval 531–555 is disordered; that stretch reads QQNVDDLSRDTGNANGSIGPIFDKE. Residues 781-784 carry the VENN CT cleavage motif motif; it reads VENN. Positions 954–1077 are DNase activity; it reads MPWEDYVGKT…GVKVTVTQVK (124 aa).

In terms of assembly, interacts with cognate immunity protein CdiI-YPIII, which blocks its toxic DNase activity. It depends on Zn(2+) as a cofactor.

It localises to the target cell. The protein localises to the target cell cytoplasm. Toxic component of a toxin-immunity protein module, which functions as a cellular contact-dependent growth inhibition (CDI) system. CDI modules allow bacteria to communicate with and inhibit the growth of closely related neighboring bacteria in a contact-dependent fashion. The C-terminal 123 residues (954-1077) has DNase activity in the presence of Zn(2+), converting supercoiled DNA into open-circular form. Toxic activity is neutralized by coexpression of the cognate immunity protein CdiI-YPIII, but not by non-cognate immunity proteins from other toxin-immunity modules. Expression of the DNase domain as a chimera allows bacteria to attack other non-immune bacteria which become filamentous and have lost DNA staining. In terms of biological role, the CdiA protein is thought to be exported from the cell through the central lumen of CdiB, the other half of its two-partner system (TPS). The TPS domain probably remains associated with CdiB while the FHA-1 domain forms an extended filament with the receptor-binding domain (RBD) at its extremity; in the secretion arrested state the C-terminus of the RBD and YP domains form a hairpin-like structure as the FHA-2, PT and CT domains are periplasmic. The YP domain is probably responsible for this arrest at the point where it re-enters the host cell periplasm. Upon binding to a target cell outer membrane receptor a signal is transmitted to activate secretion. The filament elongates slightly, the rest of CdiA is secreted and the FHA-2 domain becomes stably associated with the target cell's outer membrane where it facilitates entry of the toxic CT domain into the target cell periplasm. From there the toxic CT domain is cleaved and gains access to the target cell cytoplasm via an inner membrane protein. The sequence is that of Deoxyribonuclease CdiA from Yersinia pseudotuberculosis serotype O:3 (strain YPIII).